A 476-amino-acid chain; its full sequence is MATPANQNGRITQVIGAVVDVQFEGHLPAILNAIETKNGNNRLVLEVAQHLGESTVRTIAMDTTEGLVRGQEVTDTGSPIMVPVGLGTLGRIMNVIGEPVDEQGPVANEGLRPIHAEAPLYTDQSTEAEILVTGIKVVDLLAPYAKGGKIGLFGGAGVGKTVLIQELINNVAKAHGGYSVFAGVGERTREGNDLYHEFIESGVNKKGGGEGSKCALVYGQMNEPPGARARVALSGLTVAEHFRDQGQDVLFFVDNIFRFTQAGSEVSALLGRIPSAVGYQPTLATDMGALQERITTTHKGSITSVQAIYVPADDLTDPAPATSFAHLDATTVLNRAISEKGIYPAVDPLDSTSRMLSPLIVGEEHYQTARMVQQVLQKYKSLQDIIAILGMDELSEEDKIAVARARKIERFLSQPFFVAEIFTGSPGKFVDLADTIKGFRAICEGKYDHLPEAAFYMVGTIEEAVEKGKKLAAEAA.

Glycine 154–threonine 161 provides a ligand contact to ATP.

It belongs to the ATPase alpha/beta chains family. In terms of assembly, F-type ATPases have 2 components, CF(1) - the catalytic core - and CF(0) - the membrane proton channel. CF(1) has five subunits: alpha(3), beta(3), gamma(1), delta(1), epsilon(1). CF(0) has four main subunits: a(1), b(1), b'(1) and c(9-12).

The protein resides in the cell inner membrane. It catalyses the reaction ATP + H2O + 4 H(+)(in) = ADP + phosphate + 5 H(+)(out). Functionally, produces ATP from ADP in the presence of a proton gradient across the membrane. The catalytic sites are hosted primarily by the beta subunits. In Rhodopseudomonas palustris (strain BisA53), this protein is ATP synthase subunit beta.